The sequence spans 321 residues: Probable transaldolase (321 aa).

K133 (schiff-base intermediate with substrate) is an active-site residue.

This sequence belongs to the transaldolase family. Type 1 subfamily. As to quaternary structure, homodimer.

The protein localises to the cytoplasm. The catalysed reaction is D-sedoheptulose 7-phosphate + D-glyceraldehyde 3-phosphate = D-erythrose 4-phosphate + beta-D-fructose 6-phosphate. Its pathway is carbohydrate degradation; pentose phosphate pathway; D-glyceraldehyde 3-phosphate and beta-D-fructose 6-phosphate from D-ribose 5-phosphate and D-xylulose 5-phosphate (non-oxidative stage): step 2/3. Transaldolase is important for the balance of metabolites in the pentose-phosphate pathway. The chain is Probable transaldolase (tal) from Dictyostelium discoideum (Social amoeba).